The following is a 299-amino-acid chain: YjeF N-terminal domain-containing protein 3 (299 aa).

In terms of domain architecture, YjeF N-terminal spans 74–287 (AAALERELLE…DVRRKFALRL (214 aa)).

In terms of assembly, interacts with APOA1. Binds to HDL. Expressed in theca cells in ovary and in Leydig cells in testis (at protein level). Also expressed in brain and mammary gland.

Its function is as follows. May accelerate cholesterol efflux from endothelial cells to high-density lipoprotein (HDL) and thereby regulates angiogenesis. May orchestrate hematopoietic stem and progenitor cell emergence from the hemogenic endothelium, a type of specialized endothelium manifesting hematopoietic potential. YJEFN3-mediated cholesterol efflux activates endothelial SREBF2, the master transcription factor for cholesterol biosynthesis, which in turn transactivates NOTCH and promotes hematopoietic stem and progenitor cell emergence. May play a role in spermiogenesis and oogenesis. The protein is YjeF N-terminal domain-containing protein 3 (YJEFN3) of Homo sapiens (Human).